Consider the following 472-residue polypeptide: MMQHASPAPALTMMATQNVPPPPYQDSPQMTATAQPPSKAQAVHISAPSAAASTPVPSAPIDPQAQLEADKRAVYRHPLFPLLTLLFEKCEQATQGSECITSASFDVDIENFVHQQEQEHKPFFSDDPELDNLMVKAIQVLRIHLLELEKVNELCKDFCNRYITCLKTKMHSDNLLRNDLGGPYSPNQPSINLHSQDLLQNSPNSMSGVSNNPQGIVVPASALQQGNIAMTTVNSQVVSGGALYQPVTMVTSQGQVVTQAIPQGAIQIQNTQVNLDLTSLLDNEDKKSKNKRGVLPKHATNIMRSWLFQHLMHPYPTEDEKRQIAAQTNLTLLQVNNWFINARRRILQPMLDASNPDPAPKAKKIKSQHRPTQRFWPNSIAAGVLQQQGGAPGTNPDGSINLDNLQSLSSDSATMAMQQAMMAAHDDSLDGTEEEDEDEMEEEEEEELEEEVDELQTTNVSDLGLEHSDSLE.

Residues 1–62 are disordered; sequence MMQHASPAPA…STPVPSAPID (62 aa). A compositionally biased stretch (polar residues) spans 26-38; the sequence is DSPQMTATAQPPS. Residues 46–56 are compositionally biased toward low complexity; the sequence is SAPSAAASTPV. The 84-residue stretch at 96–179 folds into the MEIS N-terminal domain; sequence GSECITSASF…MHSDNLLRND (84 aa). A DNA-binding region (homeobox) is located at residues 291–350; it reads KRGVLPKHATNIMRSWLFQHLMHPYPTEDEKRQIAAQTNLTLLQVNNWFINARRRILQPM. 3 disordered regions span residues 351 to 371, 386 to 405, and 422 to 472; these read LDAS…QHRP, QQQG…LDNL, and MAAH…DSLE. The segment covering 361 to 371 has biased composition (basic residues); it reads KAKKIKSQHRP. The span at 429-454 shows a compositional bias: acidic residues; sequence LDGTEEEDEDEMEEEEEEELEEEVDE.

It belongs to the TALE/MEIS homeobox family.

It is found in the nucleus. This Homo sapiens (Human) protein is Homeobox protein PKNOX2 (PKNOX2).